We begin with the raw amino-acid sequence, 1525 residues long: Multidrug resistance protein mrp-7 (1525 aa).

Residues 1–24 (MLSSFCGDGHPFSTGLPNVSICAQ) are Extracellular-facing. N-linked (GlcNAc...) asparagine glycosylation is present at N18. The chain crosses the membrane as a helical span at residues 25 to 45 (HTVLVWVPAAFFLLTLPFLSA). The Cytoplasmic segment spans residues 46–66 (QCHLTAQRFARLPFSAHFIIK). The helical transmembrane segment at 67–87 (LLLVAFLAANSLATWCYVLFS) threads the bilayer. At 88 to 94 (KNSYAAA) the chain is on the extracellular side. A helical membrane pass occupies residues 95-115 (YYVYPGLWVLVWTGTFLVHLI). At 116–118 (RLR) the chain is on the cytoplasmic side. The chain crosses the membrane as a helical span at residues 119–139 (CGLVSSGIQHVTSLIFLLCGA). At 140–165 (PEFYQWIRMENSNSFPNDLTTTDSAQ) the chain is on the extracellular side. The chain crosses the membrane as a helical span at residues 166–186 (FLSIAYLSWYSALILYTFSLC). Residues 187 to 346 (FADPRGAKTD…APFWKGMALS (160 aa)) are Cytoplasmic-facing. The region spanning 305 to 587 (LLASTLKFVS…IALLINQAVQ (283 aa)) is the ABC transmembrane type-1 1 domain. Residues 347–367 (ILMFSVSELRSLILNGYFYIM) form a helical membrane-spanning segment. The Extracellular segment spans residues 368–434 (FRMGTKIQTS…SCPYQITFAL (67 aa)). A helical transmembrane segment spans residues 435–455 (VYLFITLGYSALPGVVIMVIF). The Cytoplasmic portion of the chain corresponds to 456 to 535 (VPMNIISSMI…NILDSFNTAS (80 aa)). Residues 536-556 (PFLVALFSFGTFVLSNPSHLL) form a helical membrane-spanning segment. Residues 557–561 (TPQIA) are Extracellular-facing. A helical transmembrane segment spans residues 562 to 582 (FVSLALFNQLRSPMTMIALLI). Residues 583–953 (NQAVQAVVSN…ATYQLYVKAA (371 aa)) lie on the Cytoplasmic side of the membrane. Residues 622-849 (VRVENLTASW…RGLFFDFMEE (228 aa)) enclose the ABC transporter 1 domain. 659-666 (GKVGSGKS) is a binding site for ATP. The interval 900–925 (ELTTQISTMSSPEKPPTGTSPAAATE) is disordered. The chain crosses the membrane as a helical span at residues 954–974 (GYLLSIAFIGFFIVYMTLQIL). The ABC transmembrane type-1 2 domain maps to 959-1245 (IAFIGFFIVY…AVRQVSEIEA (287 aa)). Residues 975-1005 (RSFWLSAWSDEYDPDSPSAHPMAKGWRLGVY) lie on the Extracellular side of the membrane. The helical transmembrane segment at 1006-1026 (GALGFSETACFFVALLALVFV) threads the bilayer. At 1027-1068 (GQRASKNLHGPLIHNLMRSPMSFYDTTPLGRILNRCAKDIET) the chain is on the cytoplasmic side. A helical transmembrane segment spans residues 1069–1089 (IDMMLPMNFRYLVMCVLQVAF). T1090 is a topological domain (extracellular). Residues 1091–1111 (LIVIIISTPLFAVVILPLALI) form a helical membrane-spanning segment. Residues 1112 to 1184 (YLIFLRYYVP…RYSSLVSNRW (73 aa)) lie on the Cytoplasmic side of the membrane. Residues 1185–1205 (LAVRLEFVGNCIIFFAALFAV) form a helical membrane-spanning segment. At 1206-1525 (LSKEFGWITS…ADAAEQDKHE (320 aa)) the chain is on the extracellular side. N1228 is a glycosylation site (N-linked (GlcNAc...) asparagine). One can recognise an ABC transporter 2 domain in the interval 1282–1516 (VKFDGYSTRY…KNSAFAKMVA (235 aa)). Position 1316 to 1323 (1316 to 1323 (GRTGAGKS)) interacts with ATP. N-linked (GlcNAc...) asparagine glycosylation is found at N1358 and N1418.

This sequence belongs to the ABC transporter superfamily. ABCC family. Conjugate transporter (TC 3.A.1.208) subfamily. In terms of tissue distribution, expressed in head neurons, including the dopamine (DA) motor neuron, and other cells in the body.

The protein resides in the cell membrane. Functionally, negatively regulates cellular toxicity by mediating the export of environmental toxicants such as methylmercury out of the cell. Plays a role in inhibiting methylmercury-induced dopamine (DA) motor neuron degeneration. Not involved in Mn(2+)- or Al(3+)-associated toxicity. In Caenorhabditis elegans, this protein is Multidrug resistance protein mrp-7.